The sequence spans 376 residues: Palmitoyltransferase PFA4 (376 aa).

Topologically, residues 1–11 (MPVKLKWPWLG) are cytoplasmic. Residues 12-32 (IAIPSFLIASIGYCAHYFILL) form a helical membrane-spanning segment. Topologically, residues 33-40 (NFLSLRKQ) are lumenal. A helical membrane pass occupies residues 41–61 (LWYQFCQTMIWLSYYLAIYTP). Residues 62–122 (PGKPPTNFKP…NCVGYNNFPH (61 aa)) are Cytoplasmic-facing. The DHHC domain maps to 78–128 (VYCKKCKCYKPERSHHCKTCNQCVLMMDHHCPWTMNCVGYNNFPHFIRFLF). Catalysis depends on C108, which acts as the S-palmitoyl cysteine intermediate. The helical transmembrane segment at 123–143 (FIRFLFWVIVGTTSLAIFLTT) threads the bilayer. The Lumenal portion of the chain corresponds to 144–163 (RIHSIWVHRSSPSYLYYKSE). A helical transmembrane segment spans residues 164–184 (LIFLTILTPLNAFILLTISIL). Residues 185–376 (MIRCLFNQIF…EDFGVDVDVE (192 aa)) lie on the Cytoplasmic side of the membrane.

It belongs to the DHHC palmitoyltransferase family. PFA4 subfamily.

It is found in the endoplasmic reticulum membrane. It carries out the reaction L-cysteinyl-[protein] + hexadecanoyl-CoA = S-hexadecanoyl-L-cysteinyl-[protein] + CoA. Mediates the reversible addition of palmitate to target proteins, thereby regulating their membrane association and biological function. The polypeptide is Palmitoyltransferase PFA4 (Candida glabrata (strain ATCC 2001 / BCRC 20586 / JCM 3761 / NBRC 0622 / NRRL Y-65 / CBS 138) (Yeast)).